The chain runs to 174 residues: Crossover junction endodeoxyribonuclease RuvC (174 aa).

Catalysis depends on residues Asp-8, Glu-69, and Asp-141. Asp-8, Glu-69, and Asp-141 together coordinate Mg(2+).

It belongs to the RuvC family. As to quaternary structure, homodimer which binds Holliday junction (HJ) DNA. The HJ becomes 2-fold symmetrical on binding to RuvC with unstacked arms; it has a different conformation from HJ DNA in complex with RuvA. In the full resolvosome a probable DNA-RuvA(4)-RuvB(12)-RuvC(2) complex forms which resolves the HJ. Mg(2+) is required as a cofactor.

Its subcellular location is the cytoplasm. The catalysed reaction is Endonucleolytic cleavage at a junction such as a reciprocal single-stranded crossover between two homologous DNA duplexes (Holliday junction).. The RuvA-RuvB-RuvC complex processes Holliday junction (HJ) DNA during genetic recombination and DNA repair. Endonuclease that resolves HJ intermediates. Cleaves cruciform DNA by making single-stranded nicks across the HJ at symmetrical positions within the homologous arms, yielding a 5'-phosphate and a 3'-hydroxyl group; requires a central core of homology in the junction. The consensus cleavage sequence is 5'-(A/T)TT(C/G)-3'. Cleavage occurs on the 3'-side of the TT dinucleotide at the point of strand exchange. HJ branch migration catalyzed by RuvA-RuvB allows RuvC to scan DNA until it finds its consensus sequence, where it cleaves and resolves the cruciform DNA. The chain is Crossover junction endodeoxyribonuclease RuvC from Xanthomonas axonopodis pv. citri (strain 306).